The primary structure comprises 119 residues: NADH-quinone oxidoreductase subunit A (119 aa).

A run of 3 helical transmembrane segments spans residues 7–27, 63–83, and 88–108; these read FPVL…MFLG, LIAI…PWGV, and IGWL…VGFV.

It belongs to the complex I subunit 3 family. NDH-1 is composed of 14 different subunits. Subunits NuoA, H, J, K, L, M, N constitute the membrane sector of the complex.

The protein localises to the cell inner membrane. It carries out the reaction a quinone + NADH + 5 H(+)(in) = a quinol + NAD(+) + 4 H(+)(out). NDH-1 shuttles electrons from NADH, via FMN and iron-sulfur (Fe-S) centers, to quinones in the respiratory chain. The immediate electron acceptor for the enzyme in this species is believed to be ubiquinone. Couples the redox reaction to proton translocation (for every two electrons transferred, four hydrogen ions are translocated across the cytoplasmic membrane), and thus conserves the redox energy in a proton gradient. In Polynucleobacter necessarius subsp. necessarius (strain STIR1), this protein is NADH-quinone oxidoreductase subunit A.